Consider the following 141-residue polypeptide: Probable mitochondrial pyruvate carrier 1 (141 aa).

The next 2 membrane-spanning stretches (helical) occupy residues 31–52 (YLCSTHFWGPLSNFGIPIAAIL) and 60–82 (LISGRMTGALILYSSVFMRYAWM).

It belongs to the mitochondrial pyruvate carrier (MPC) (TC 2.A.105) family. The functional 150 kDa pyruvate import complex is a heteromer of mpc1 and mpc2.

It localises to the mitochondrion. It is found in the mitochondrion inner membrane. Mediates the uptake of pyruvate into mitochondria. The chain is Probable mitochondrial pyruvate carrier 1 from Schizosaccharomyces pombe (strain 972 / ATCC 24843) (Fission yeast).